The chain runs to 75 residues: Sec-independent protein translocase protein TatA (75 aa).

Residues 1 to 21 (MGSFSIWHWLIVLVIIALVFG) traverse the membrane as a helical segment. Positions 45 to 75 (DASADKPADQVTQQRVSDDTIDVQAKEKSNS) are disordered.

It belongs to the TatA/E family. In terms of assembly, the Tat system comprises two distinct complexes: a TatABC complex, containing multiple copies of TatA, TatB and TatC subunits, and a separate TatA complex, containing only TatA subunits. Substrates initially bind to the TatABC complex, which probably triggers association of the separate TatA complex to form the active translocon.

The protein resides in the cell inner membrane. Part of the twin-arginine translocation (Tat) system that transports large folded proteins containing a characteristic twin-arginine motif in their signal peptide across membranes. TatA could form the protein-conducting channel of the Tat system. The polypeptide is Sec-independent protein translocase protein TatA (Bordetella bronchiseptica (strain ATCC BAA-588 / NCTC 13252 / RB50) (Alcaligenes bronchisepticus)).